The following is a 225-amino-acid chain: Ribose-5-phosphate isomerase A (225 aa).

Substrate is bound by residues 26–29 (TGST), 82–85 (DGAD), and 95–98 (KGGG). Residue Glu104 is the Proton acceptor of the active site. Residue Lys122 coordinates substrate.

This sequence belongs to the ribose 5-phosphate isomerase family. Homodimer.

It catalyses the reaction aldehydo-D-ribose 5-phosphate = D-ribulose 5-phosphate. Its pathway is carbohydrate degradation; pentose phosphate pathway; D-ribose 5-phosphate from D-ribulose 5-phosphate (non-oxidative stage): step 1/1. Functionally, catalyzes the reversible conversion of ribose-5-phosphate to ribulose 5-phosphate. In Streptococcus sanguinis (strain SK36), this protein is Ribose-5-phosphate isomerase A.